A 251-amino-acid chain; its full sequence is 1-(5-phosphoribosyl)-5-[(5-phosphoribosylamino)methylideneamino] imidazole-4-carboxamide isomerase (251 aa).

Asp-8 functions as the Proton acceptor in the catalytic mechanism. Asp-131 functions as the Proton donor in the catalytic mechanism.

This sequence belongs to the HisA/HisF family.

It localises to the cytoplasm. The catalysed reaction is 1-(5-phospho-beta-D-ribosyl)-5-[(5-phospho-beta-D-ribosylamino)methylideneamino]imidazole-4-carboxamide = 5-[(5-phospho-1-deoxy-D-ribulos-1-ylimino)methylamino]-1-(5-phospho-beta-D-ribosyl)imidazole-4-carboxamide. Its pathway is amino-acid biosynthesis; L-histidine biosynthesis; L-histidine from 5-phospho-alpha-D-ribose 1-diphosphate: step 4/9. The sequence is that of 1-(5-phosphoribosyl)-5-[(5-phosphoribosylamino)methylideneamino] imidazole-4-carboxamide isomerase from Burkholderia vietnamiensis (strain G4 / LMG 22486) (Burkholderia cepacia (strain R1808)).